Reading from the N-terminus, the 694-residue chain is Type VI secretion system spike protein VgrG2 (694 aa).

Belongs to the VgrG protein family.

It localises to the secreted. Functionally, part of the type VI secretion system specialized secretion system, which delivers several virulence factors in both prokaryotic and eukaryotic cells during infection. Forms the spike at the tip of the elongating tube formed by haemolysin co-regulated protein Hcp. Allows the delivery of the VasX antibacterial toxin to target cells where it exerts its toxicity. This Vibrio cholerae serotype O1 (strain ATCC 39315 / El Tor Inaba N16961) protein is Type VI secretion system spike protein VgrG2 (vgrG2).